Consider the following 225-residue polypeptide: UPF0758 protein XOO0495 (225 aa).

The MPN domain maps to 102–224; the sequence is ALSDPPSVGR…PVSLAERGWL (123 aa). Residues His173, His175, and Asp186 each coordinate Zn(2+). Residues 173 to 186 carry the JAMM motif motif; that stretch reads HNHPSGNPEPSKAD.

It belongs to the UPF0758 family.

The sequence is that of UPF0758 protein XOO0495 from Xanthomonas oryzae pv. oryzae (strain KACC10331 / KXO85).